Reading from the N-terminus, the 781-residue chain is Pyrin (781 aa).

The Pyrin domain occupies 1 to 92; the sequence is MAKTPSDHLL…AEELHRAAIQ (92 aa). A compositionally biased stretch (polar residues) spans 93-111; the sequence is EYSTQENGTDDSAASSSLG. The disordered stretch occupies residues 93–226; sequence EYSTQENGTD…AGGAPGQKEC (134 aa). The span at 113-126 shows a compositional bias: basic and acidic residues; sequence NKPRSLKTPDHPEG. The span at 153–163 shows a compositional bias: basic residues; sequence LSRKPLSKRRE. S242 bears the Phosphoserine mark. Residues 266–280 are interaction with RELA; it reads KTAANLDSATEPRAR. Disordered stretches follow at residues 270–322 and 336–373; these read NLDS…EGDP and EAVS…QPLP. The segment at 370-412 adopts a B box-type zinc-finger fold; the sequence is QPLPQCKRHLKQVQLLFCEDHDEPICLICSLSQEHQGHRVRPI. A coiled-coil region spans residues 413–442; sequence EEVALEHKKKIQKQLEHLKKLRKSGEEQRS. The Nuclear localization signal signature appears at 420 to 437; that stretch reads KKKIQKQLEHLKKLRKSG. Residues 420 to 582 are required for homotrimerization and induction of pyroptosomes; it reads KKKIQKQLEH…YFSETLRSEM (163 aa). One can recognise a B30.2/SPRY domain in the interval 580 to 775; that stretch reads SEMEMFNVPE…NTAPLTICPV (196 aa).

Homotrimer. Interacts (via the B box-type zinc finger) with PSTPIP1. Interacts (via the B30.2/SPRY domain) with several components of the inflammasome complex, including CASP1 p20 and p10 subunits, CASP5, PYCARD, NLRP1, NLRP2 and NLRP3, as well as with unprocessed IL1B; this interaction may lead to autophagic degradation of these proteins. Component of the AIM2 PANoptosome complex, a multiprotein complex that drives inflammatory cell death (PANoptosis). Interacts with NFKBIA and RELA. Interacts weakly with VASP and ACTR3. Interacts with active ULK1 (phosphorylated on 'Ser-317') and BECN1 simultaneously. Also interacts with ATG16L1 (via WD repeats), and with ATG8 family members, including GABARAP, GABARAPL1 and, to a lesser extent, GABARAPL2, MAP1LC3A/LC3A and MAP1LC3C/LC3C. Interacts with TRIM21. Interacts with YWHAB, YWHAE, YWHAG, YWHAH, YWHAQ and YWHAZ; the interaction is required for the down-regulation of pyrin pro-inflammatory activity. Post-translationally, cleaved by CASP1. The N-terminal cleavage product localizes to the nucleus as a filamentous network and to the cytoplasm, interacts more strongly with RELA and NFKBIA than the full-length protein, enhances the nuclear localization of RELA and induces NFKBIA proteolysis. The C-terminal cleavage product localizes to the cytoplasm. Phosphorylation at Ser-242 is required for the interaction with 14-3-3 proteins and down-regulation of pyrin pro-inflammatory activity. In terms of processing, degraded along with the delivery of its substrates to autolysosomal compartments (at protein level). In terms of tissue distribution, expressed in peripheral blood leukocytes, particularly in mature granulocytes and to a lesser extent in monocytes but not in lymphocytes. Detected in spleen, lung and muscle, probably as a result of leukocyte infiltration in these tissues. Not expressed in thymus, prostate, testis, ovary, small intestine, colon, heart, brain, placenta, liver, kidney, pancreas. Expression detected in several myeloid leukemic, colon cancer, and prostate cancer cell lines.

It is found in the cytoplasm. Its subcellular location is the cytoskeleton. It localises to the cell projection. The protein resides in the ruffle. The protein localises to the lamellipodium. It is found in the nucleus. Its subcellular location is the cytoplasmic vesicle. It localises to the autophagosome. Functionally, involved in the regulation of innate immunity and the inflammatory response in response to IFNG/IFN-gamma. Organizes autophagic machinery by serving as a platform for the assembly of ULK1, Beclin 1/BECN1, ATG16L1, and ATG8 family members and recognizes specific autophagy targets, thus coordinating target recognition with assembly of the autophagic apparatus and initiation of autophagy. Acts as an autophagy receptor for the degradation of several inflammasome components, including CASP1, NLRP1 and NLRP3, hence preventing excessive IL1B- and IL18-mediated inflammation. However, it can also have a positive effect in the inflammatory pathway, acting as an innate immune sensor that triggers PYCARD/ASC specks formation, caspase-1 activation, and IL1B and IL18 production. Together with AIM2, also acts as a mediator of pyroptosis, necroptosis and apoptosis (PANoptosis), an integral part of host defense against pathogens, in response to bacterial infection. It is required for PSTPIP1-induced PYCARD/ASC oligomerization and inflammasome formation. Recruits PSTPIP1 to inflammasomes, and is required for PSTPIP1 oligomerization. The polypeptide is Pyrin (Homo sapiens (Human)).